We begin with the raw amino-acid sequence, 146 residues long: P antigen family member 1 (146 aa).

The interval 16–146 (YVESSEESSD…PEEDEGQSQP (131 aa)) is disordered. Positions 19-32 (SSEESSDEQPDEVE) are enriched in acidic residues. The residue at position 63 (Ser63) is a Phosphoserine. Positions 79-92 (PDTKRVCLRNEEQM) are enriched in basic and acidic residues. Position 105 is a phosphoserine (Ser105). Residues 107–120 (EQVHPKTGCERGDG) are compositionally biased toward basic and acidic residues. A Phosphoserine modification is found at Ser144.

Belongs to the GAGE family. As to expression, isolated from prostate cancer cell lines; expression associated with progression to androgen insensitive phenotype. Expressed in normal testis and at lower level in normal placenta.

This is P antigen family member 1 (PAGE1) from Homo sapiens (Human).